The primary structure comprises 180 residues: uncharacterized protein (180 aa).

This is an uncharacterized protein from Dictyostelium discoideum (Social amoeba).